A 479-amino-acid polypeptide reads, in one-letter code: Octopamine receptor (479 aa).

At 1-57 (MGQAATHDANNYTSINYTEIYDVIEDEKDVCAVADEPNIPCSFGISLAVPEWEAICT) the chain is on the extracellular side. N-linked (GlcNAc...) asparagine glycosylation is found at N11 and N16. A helical membrane pass occupies residues 58–80 (AIILTMIIISTVVGNILVILSVF). Over 81 to 90 (TYKPLRIVQN) the chain is Cytoplasmic. Residues 91–112 (FFIVSLAVADLTVAILVLPLNV) traverse the membrane as a helical segment. Residues 113-129 (AYSILGQWVFGIYVCKM) are Extracellular-facing. The chain crosses the membrane as a helical span at residues 130–150 (WLTCDIMCCTSSILNLCAIAL). Residues 151 to 170 (DRYWAITDPINYAQKRTLER) lie on the Cytoplasmic side of the membrane. The chain crosses the membrane as a helical span at residues 171-193 (VLFMIGIVWILSLVISSPPLLGW). The Extracellular segment spans residues 194–218 (NDWPEVFEPDTPCRLTSQPGFVIFS). Residues 219-240 (SSGSFYIPLVIMTVVYFEIYLA) form a helical membrane-spanning segment. Residues 241-407 (TKKRLRDRAK…LTRERRAART (167 aa)) are Cytoplasmic-facing. Residues 260–319 (GRNKYETKESDPNDQDSVSSDANPNEHQGGTRLVAENEKKHRTRKLTPKKKPKRRYWSKD) are disordered. A compositionally biased stretch (polar residues) spans 274–287 (QDSVSSDANPNEHQ). Over residues 299-315 (KHRTRKLTPKKKPKRRY) the composition is skewed to basic residues. The helical transmembrane segment at 408 to 429 (LGIIMGVFVVCWLPFFVIYLVI) threads the bilayer. Residues 430 to 441 (PFCVSCCLSNKF) are Extracellular-facing. Residues 442-462 (INFITWLGYVNSALNPLIYTI) form a helical membrane-spanning segment. Residues 463–479 (FNMDFRRAFKKLLFIKC) are Cytoplasmic-facing.

This sequence belongs to the G-protein coupled receptor 1 family.

The protein resides in the cell membrane. Its function is as follows. Receptor for octopamine. Octopamine (OA) is a neurotransmitter, neurohormone, and neuromodulator in invertebrates. The activity of this receptor is mediated by G proteins which activate adenylyl cyclase. The sequence is that of Octopamine receptor from Bombyx mori (Silk moth).